A 458-amino-acid chain; its full sequence is Sphingoid long chain base kinase 4 (458 aa).

The 139-residue stretch at lysine 103–glycine 241 folds into the DAGKc domain. ATP is bound by residues asparagine 113–histidine 115 and threonine 145. Glycine 170–glycine 173 contributes to the substrate binding site. The active-site Proton donor/acceptor is the aspartate 172. Residues glutamate 177, glycine 202–glycine 204, arginine 266, arginine 272, and aspartate 426–glutamate 428 contribute to the ATP site.

It is found in the cell membrane. Its subcellular location is the endoplasmic reticulum membrane. It localises to the late endosome membrane. The protein localises to the golgi apparatus membrane. The catalysed reaction is a sphingoid base + ATP = a sphingoid 1-phosphate + ADP + H(+). Catalyzes the phosphorylation of the sphingoid long chain bases dihydrosphingosine (DHS) and phytosphingosine (PHS) to form dihydrosphingosine 1-phosphate (DHS-1P) and phytosphingosine 1-phosphate (PHS-1P) respectively. Involved in the biosynthesis of sphingolipids and ceramides. Involved in heat-induced transient cell cycle arrest. Accumulation of phosphorylated sphingoid long chain bases (LCBPs) stimulates calcium influx and activates calcineurin signaling. Involved in heat-stress resistance. The protein is Sphingoid long chain base kinase 4 (lcb4) of Schizosaccharomyces pombe (strain 972 / ATCC 24843) (Fission yeast).